The sequence spans 460 residues: Rab-3A-interacting protein (460 aa).

Phosphoserine occurs at positions 147, 149, 247, 250, 272, and 280. Residues 149-244 (SVLEVREKGY…EVAALKTLVL (96 aa)) are a coiled coil. The segment at 246 to 280 (SSPTSPTQEPLAAGKTPFKRGHTRNKSTSSAMSGS) is disordered. Over residues 271-280 (KSTSSAMSGS) the composition is skewed to polar residues.

It belongs to the SEC2 family. Homodimer. Interacts with the N-terminal region of SSX2. Interacts with the GDP-bound forms of RAB8A and RAB8B. The interaction with RAB8A is prevented by phosphorylation of RAB8A at 'Thr-72'. Interacts with the GDP-bound forms of RAB3A and RAB3D. Interacts with DCDC1. Interacts (via the N-terminal region) with TRAPPC14; this interaction mediates RAB3IP association with the TRAPP II complex. Forms a heterotetramer with RAB11A where RAB3IP homodimer binds two RAB11A subunits. Forms a complex with RAB11A and RAB11FIP3, probably a heterohexamer with two of each protein subunit, where Rabin8/RAB3IP and RAB11FIP3 simultaneously bind to RAB11A; the complex promotes preciliary trafficking. Forms a complex containing RAB11A, ASAP1, RAB3IP, RAP11FIP3 and ARF4; the complex promotes preciliary trafficking; the complex binds to RHO in photoreceptor cells and promotes RHO ciliary transport. In terms of tissue distribution, ubiquitously expressed. Expressed at highest level in testis.

The protein localises to the cytoplasm. Its subcellular location is the nucleus. It localises to the cytoskeleton. It is found in the cell projection. The protein resides in the lamellipodium. Its function is as follows. Guanine nucleotide exchange factor (GEF) which may activate RAB8A and RAB8B. Promotes the exchange of GDP to GTP, converting inactive GDP-bound Rab proteins into their active GTP-bound form. Mediates the release of GDP from RAB8A and RAB8B but not from RAB3A or RAB5. Modulates actin organization and promotes polarized transport of RAB8A-specific vesicles to the cell surface. Together with RAB11A, RAB8A, the exocyst complex, PARD3, PRKCI, ANXA2, CDC42 and DNMBP promotes transcytosis of PODXL to the apical membrane initiation sites (AMIS), apical surface formation and lumenogenesis. Together with RAB11A and FIP3/RAB11FIP3, parts of the ciliary targeting complex that promotes preciliary vesicle trafficking to mother centriole and ciliogenesis initiation. Part of the ciliary targeting complex containing Rab11, ASAP1, RAB3IP and RAB11FIP3 and ARF4 that promotes RAB3IP preciliary vesicle trafficking to mother centriole and ciliogenesis initiation. The polypeptide is Rab-3A-interacting protein (Rab3ip) (Rattus norvegicus (Rat)).